The chain runs to 131 residues: Small ribosomal subunit protein uS11 (131 aa).

Belongs to the universal ribosomal protein uS11 family. In terms of assembly, part of the 30S ribosomal subunit. Interacts with proteins S7 and S18. Binds to IF-3.

Functionally, located on the platform of the 30S subunit, it bridges several disparate RNA helices of the 16S rRNA. Forms part of the Shine-Dalgarno cleft in the 70S ribosome. This is Small ribosomal subunit protein uS11 from Deinococcus geothermalis (strain DSM 11300 / CIP 105573 / AG-3a).